The chain runs to 231 residues: Transcriptional regulator NRG1 (231 aa).

Ser163 is subject to Phosphoserine. C2H2-type zinc fingers lie at residues 174–196 (YICK…NRIH) and 202–226 (HCCP…YRTH).

Its subcellular location is the nucleus. Its function is as follows. Transcriptional repressor involved in regulation of glucose repression. Binds to UAS-1 in the STA1 promoter. In Saccharomyces cerevisiae (strain ATCC 204508 / S288c) (Baker's yeast), this protein is Transcriptional regulator NRG1 (NRG1).